Reading from the N-terminus, the 425-residue chain is Enolase (425 aa).

Residue Gln162 coordinates (2R)-2-phosphoglycerate. The Proton donor role is filled by Glu204. Asp241, Glu282, and Asp309 together coordinate Mg(2+). Residues Lys334, Arg363, Ser364, and Lys385 each coordinate (2R)-2-phosphoglycerate. The active-site Proton acceptor is the Lys334.

This sequence belongs to the enolase family. Requires Mg(2+) as cofactor.

It is found in the cytoplasm. Its subcellular location is the secreted. It localises to the cell surface. The catalysed reaction is (2R)-2-phosphoglycerate = phosphoenolpyruvate + H2O. It functions in the pathway carbohydrate degradation; glycolysis; pyruvate from D-glyceraldehyde 3-phosphate: step 4/5. Catalyzes the reversible conversion of 2-phosphoglycerate (2-PG) into phosphoenolpyruvate (PEP). It is essential for the degradation of carbohydrates via glycolysis. The protein is Enolase of Corynebacterium aurimucosum (strain ATCC 700975 / DSM 44827 / CIP 107346 / CN-1) (Corynebacterium nigricans).